The primary structure comprises 213 residues: StAR-related lipid transfer protein 5 (213 aa).

The 213-residue stretch at 1–213 (MDPALAAQMS…LQKAVKQFHE (213 aa)) folds into the START domain.

In terms of biological role, may be involved in the intracellular transport of sterols or other lipids. May bind cholesterol or other sterols. This is StAR-related lipid transfer protein 5 (STARD5) from Homo sapiens (Human).